A 21-amino-acid chain; its full sequence is MLNERFSILVLLLILLTFSLG.

Belongs to the glycosyl hydrolase 10 (cellulase F) family.

The enzyme catalyses Endohydrolysis of (1-&gt;4)-beta-D-xylosidic linkages in xylans.. It participates in glycan degradation; xylan degradation. The chain is Endo-1,4-beta-xylanase A from Dictyoglomus sp. (strain B4A).